We begin with the raw amino-acid sequence, 566 residues long: Putative UDP-glucuronate:xylan alpha-glucuronosyltransferase 5 (566 aa).

A helical; Signal-anchor for type II membrane protein transmembrane segment spans residues 17-37; sequence LILISLSFLGLLLNFKPLFLL. Residues D372 and D374 each coordinate Mn(2+). Substrate contacts are provided by residues 372 to 374, 401 to 403, 428 to 432, and 475 to 480; these read DAD, NSG, NGGDQ, and HYLGLK. Mn(2+) is bound at residue H475.

This sequence belongs to the glycosyltransferase 8 family. Glycogenin subfamily. Mn(2+) serves as cofactor.

The protein localises to the golgi apparatus membrane. Its function is as follows. May be involved in the substitutions of the xylan backbone in stem glucuronoxylan. This is Putative UDP-glucuronate:xylan alpha-glucuronosyltransferase 5 (GUX5) from Arabidopsis thaliana (Mouse-ear cress).